Here is a 636-residue protein sequence, read N- to C-terminus: Threonine--tRNA ligase (636 aa).

Residues 1–61 (MINITLPDDS…RNDCAVRLIT (61 aa)) enclose the TGS domain. Residues 238–528 (DHRKIGTRMG…LVEHFAGKFP (291 aa)) are catalytic. 3 residues coordinate Zn(2+): Cys329, His380, and His505.

Belongs to the class-II aminoacyl-tRNA synthetase family. In terms of assembly, homodimer. The cofactor is Zn(2+).

The protein localises to the cytoplasm. It catalyses the reaction tRNA(Thr) + L-threonine + ATP = L-threonyl-tRNA(Thr) + AMP + diphosphate + H(+). Functionally, catalyzes the attachment of threonine to tRNA(Thr) in a two-step reaction: L-threonine is first activated by ATP to form Thr-AMP and then transferred to the acceptor end of tRNA(Thr). Also edits incorrectly charged L-seryl-tRNA(Thr). This is Threonine--tRNA ligase from Desulforapulum autotrophicum (strain ATCC 43914 / DSM 3382 / VKM B-1955 / HRM2) (Desulfobacterium autotrophicum).